The sequence spans 206 residues: Small ribosomal subunit protein uS4 (206 aa).

An S4 RNA-binding domain is found at 98–163 (MRLDNVVYRL…SEKFKTFVEN (66 aa)).

It belongs to the universal ribosomal protein uS4 family. As to quaternary structure, part of the 30S ribosomal subunit. Contacts protein S5. The interaction surface between S4 and S5 is involved in control of translational fidelity.

In terms of biological role, one of the primary rRNA binding proteins, it binds directly to 16S rRNA where it nucleates assembly of the body of the 30S subunit. With S5 and S12 plays an important role in translational accuracy. The polypeptide is Small ribosomal subunit protein uS4 (Clostridium botulinum (strain Alaska E43 / Type E3)).